The primary structure comprises 232 residues: C4-dicarboxylate TRAP transporter small permease protein DctQ (232 aa).

Transmembrane regions (helical) follow at residues 30 to 50, 58 to 78, 103 to 123, and 167 to 187; these read EFLIAFFMGAMTLLTFANVIM, ILWALEGTVFMFAWMVLVGAS, LYALVAVACCLAFSILLLIGS, and FIPYAALPIGMALLTFRFLQI.

The protein belongs to the TRAP transporter small permease family. As to quaternary structure, the complex comprises the extracytoplasmic solute receptor protein DctP, and the two transmembrane proteins DctQ and DctM.

The protein resides in the cell inner membrane. Functionally, part of the tripartite ATP-independent periplasmic (TRAP) transport system DctPQM involved in C4-dicarboxylates uptake. This Vibrio cholerae serotype O1 (strain ATCC 39315 / El Tor Inaba N16961) protein is C4-dicarboxylate TRAP transporter small permease protein DctQ.